Here is a 242-residue protein sequence, read N- to C-terminus: MVDYYEVLGVQRHASAEDIKKAYRKLALKWHPDKNPENKEEAERKFKQVAEAYEVLSDAKKRDIYDRYGKEGLNGGGGGGSHFDSPFEFGFTFRNPEDVFREFFGGRDPFSFDFFEDPFEDFFGHRRGPRGSRSRGTGSFFSTFSGFPSFGGAFPSFDAGFSSFGSLGHGGLTAFSSSSAFGGSGMGNYKSISTSTKVVNGRKITTKRIVENGQERVEVEEDGQLKSLTINGKEQLLRLDNK.

A J domain is found at 2–69 (VDYYEVLGVQ…KKRDIYDRYG (68 aa)). The interaction with HSP70 stretch occupies residues 2 to 146 (VDYYEVLGVQ…TGSFFSTFSG (145 aa)). Residues 119 to 242 (FEDFFGHRRG…KEQLLRLDNK (124 aa)) form an interaction with KRT18 region. At arginine 135 the chain carries Omega-N-methylarginine.

As to quaternary structure, homooligomer. Interacts with BAG3, HSPB8 and STUB1. Interacts with ALKBH1. Interacts with HSP70, KRT18 and PTTG. In terms of tissue distribution, expressed in all tissues examined with highest expression in brain and retina and lower levels observed in testis, spleen, heart, liver and kidney.

The protein resides in the cytoplasm. Its subcellular location is the perinuclear region. The protein localises to the nucleus. It localises to the myofibril. It is found in the sarcomere. The protein resides in the z line. Has a stimulatory effect on the ATPase activity of HSP70 in a dose-dependent and time-dependent manner and hence acts as a co-chaperone of HSP70. Plays an indispensable role in the organization of KRT8/KRT18 filaments. Acts as an endogenous molecular chaperone for neuronal proteins including huntingtin. Suppresses aggregation and toxicity of polyglutamine-containing, aggregation-prone proteins. Also reduces cellular toxicity and caspase-3 activity. The sequence is that of DnaJ homolog subfamily B member 6 (DNAJB6) from Bos taurus (Bovine).